The following is a 628-amino-acid chain: tRNA uridine 5-carboxymethylaminomethyl modification enzyme MnmG (628 aa).

FAD contacts are provided by residues 14–19 (GAGHAG), Val-126, and Ser-181. 273–287 (GPRYCPSIEDKVVRF) is a binding site for NAD(+). Gln-370 provides a ligand contact to FAD.

It belongs to the MnmG family. In terms of assembly, homodimer. Heterotetramer of two MnmE and two MnmG subunits. The cofactor is FAD.

The protein localises to the cytoplasm. In terms of biological role, NAD-binding protein involved in the addition of a carboxymethylaminomethyl (cmnm) group at the wobble position (U34) of certain tRNAs, forming tRNA-cmnm(5)s(2)U34. In Bacillus licheniformis (strain ATCC 14580 / DSM 13 / JCM 2505 / CCUG 7422 / NBRC 12200 / NCIMB 9375 / NCTC 10341 / NRRL NRS-1264 / Gibson 46), this protein is tRNA uridine 5-carboxymethylaminomethyl modification enzyme MnmG.